The following is a 69-amino-acid chain: uncharacterized protein (69 aa).

The tract at residues 22-48 (LFRKSRELSPIKPVRTPTPPAPTPPPM) is disordered. Positions 37–48 (TPTPPAPTPPPM) are enriched in pro residues.

This is an uncharacterized protein from Lepidoptera (butterflies and moths).